Consider the following 39-residue polypeptide: Natriuretic peptide CnNP-a (39 aa).

Residues 1–8 constitute a propeptide that is removed on maturation; the sequence is SGSKTAKI. Residues Cys12 and Cys28 are joined by a disulfide bond.

It belongs to the natriuretic peptide family. As to expression, expressed by the venom gland.

It localises to the secreted. In terms of biological role, snake venom natriuretic peptide that targets both NPR1 and NPR2. Exhibits hypotensive and vasodepressor activities. This chain is Natriuretic peptide CnNP-a, found in Cryptophis nigrescens (Eastern small-eyed snake).